Reading from the N-terminus, the 569-residue chain is Protein AF-9 (569 aa).

The YEATS domain occupies 1–138; sequence MASSCAVQVK…EDFRRKLLKA (138 aa). The interval 138–476 is disordered; sequence AGGDPNRSIH…PPPPLLKTNN (339 aa). Over residues 149 to 190 the composition is skewed to low complexity; it reads SSSSSSSSSSSSSSSSSSSSSSSSSSSSSSSSSSSSSSSSSS. The segment covering 202 to 265 has biased composition (basic and acidic residues); it reads EHKEKPSKDS…PKPMSKEPKA (64 aa). Serine 289 and serine 295 each carry phosphoserine. A Nuclear localization signal motif is present at residues 296–301; it reads AKKRKK. Residues 304–314 show a composition bias toward low complexity; that stretch reads SEALFKSFSSA. Residues 323–350 are compositionally biased toward basic and acidic residues; it reads ADKKQIKDKSHVKMGKVKIESETSEKKK. Lysine 340 is covalently cross-linked (Glycyl lysine isopeptide (Lys-Gly) (interchain with G-Cter in SUMO2)). The span at 358–369 shows a compositional bias: acidic residues; sequence DIVDPNDSDVEE. Residues 372–396 are compositionally biased toward low complexity; that stretch reads SSKSDSEQPSPASSSSSSSSSFTPS. Phosphoserine is present on residues serine 413 and serine 420. Residues 415–430 show a composition bias toward acidic residues; sequence DNEEESDEAEDNDNDS. Positions 446-462 are enriched in low complexity; it reads VSLSDGSDSESSSASSP. Serine 484 is subject to Phosphoserine.

In terms of assembly, component of the super elongation complex (SEC), at least composed of EAF1, EAF2, CDK9, MLLT3/AF9, AFF (AFF1 or AFF4), the P-TEFb complex and ELL (ELL, ELL2 or ELL3). Interacts with BCOR. Interacts with CBX8. Interacts with ALKBH4. As to expression, ubiquitously expressed. Strong expression in the spleen.

It localises to the nucleus. The protein resides in the chromosome. Chromatin reader component of the super elongation complex (SEC), a complex required to increase the catalytic rate of RNA polymerase II transcription by suppressing transient pausing by the polymerase at multiple sites along the DNA. Specifically recognizes and binds acylated histone H3, with a preference for histone H3 that is crotonylated. Crotonylation marks active promoters and enhancers and confers resistance to transcriptional repressors. Recognizes and binds histone H3 crotonylated at 'Lys-9' (H3K9cr), and with slightly lower affinity histone H3 crotonylated at 'Lys-18' (H3K18cr). Also recognizes and binds histone H3 acetylated and butyrylated at 'Lys-9' (H3K9ac and H3K9bu, respectively), but with lower affinity than crotonylated histone H3. In the SEC complex, MLLT3 is required to recruit the complex to crotonylated histones. Recruitment of the SEC complex to crotonylated histones promotes recruitment of DOT1L on active chromatin to deposit histone H3 'Lys-79' methylation (H3K79me). Plays a key role in hematopoietic stem cell (HSC) maintenance by preserving, rather than conferring, HSC stemness. Acts by binding to the transcription start site of active genes in HSCs and sustaining level of H3K79me2, probably by recruiting DOT1L. This chain is Protein AF-9 (Mllt3), found in Mus musculus (Mouse).